The following is a 125-amino-acid chain: MAFDKDAFLTVLDSMTVLELNDLVKAIEEKFGVSAASMAAPAAGGGGAGAAVAEEKTEFNVVLLEAGAQKVQVIKAVRELTGLGLKEAKDLVDGAPKNVKEGANKADAEAAKKKLEDAGAKVELK.

Belongs to the bacterial ribosomal protein bL12 family. As to quaternary structure, homodimer. Part of the ribosomal stalk of the 50S ribosomal subunit. Forms a multimeric L10(L12)X complex, where L10 forms an elongated spine to which 2 to 4 L12 dimers bind in a sequential fashion. Binds GTP-bound translation factors.

Functionally, forms part of the ribosomal stalk which helps the ribosome interact with GTP-bound translation factors. Is thus essential for accurate translation. The sequence is that of Large ribosomal subunit protein bL12 from Polaromonas naphthalenivorans (strain CJ2).